The chain runs to 488 residues: Retinoic acid receptor RXR-alpha (488 aa).

The interval 1-160 (MSSAAMDTKH…GAMASFTKHI (160 aa)) is modulating. Lysine 134 participates in a covalent cross-link: Glycyl lysine isopeptide (Lys-Gly) (interchain with G-Cter in SUMO). The segment at residues 158–233 (KHICAICGDR…MGMKREAVQE (76 aa)) is a DNA-binding region (nuclear receptor). Positions 161, 164, 178, and 181 each coordinate Zn(2+). Residues 161 to 181 (CAICGDRSSGKHYGVYSCEGC) form an NR C4-type zinc finger. Residues 186–191 (KRTVRK) are nuclear localization signal. Zn(2+)-binding residues include cysteine 197, cysteine 203, cysteine 213, and cysteine 216. An NR C4-type zinc finger spans residues 197 to 216 (CRDSKDCMIDKRQRNRCQYC). The hinge stretch occupies residues 227–250 (KREAVQEERQRGKERNENEVESSN). Residues 232-244 (QEERQRGKERNEN) show a composition bias toward basic and acidic residues. The interval 232 to 256 (QEERQRGKERNENEVESSNSANEDM) is disordered. The region spanning 253–484 (NEDMPVEKIL…TFLMEMLEAP (232 aa)) is the NR LBD domain. 2 residues coordinate 9-cis-retinoate: arginine 342 and alanine 353. All-trans-retinoate-binding residues include arginine 342 and alanine 353. The tract at residues 374–394 (RVLTELVSKMRDMQMDKTELG) is required for nuclear export. Residues 473 to 484 (IDTFLMEMLEAP) form an AF-2 region.

This sequence belongs to the nuclear hormone receptor family. NR2 subfamily. In terms of assembly, homodimer. Heterodimer; with a rar molecule. Binds DNA preferentially as a rar/rxr heterodimer. Interacts with coactivator ncoa3 and with senp6. In terms of processing, sumoylated on Lys-134; which negatively regulates transcriptional activity. Desumoylated specifically by SENP6.

The protein resides in the nucleus. Receptor for retinoic acid that acts as a transcription factor. Forms homo- or heterodimers with retinoic acid receptors (rars) and binds to target response elements in response to their ligands, all-trans or 9-cis retinoic acid, to regulate gene expression in various biological processes. The rar/rxr heterodimers bind to the retinoic acid response elements (RARE) composed of tandem 5'-AGGTCA-3' sites known as DR1-DR5 to regulate transcription. The high affinity ligand for rxrs is 9-cis retinoic acid. In the absence of ligand, the rar/rxr heterodimers associate with a multiprotein complex containing transcription corepressors that induce histone deacetylation, chromatin condensation and transcriptional suppression. On ligand binding, the corepressors dissociate from the receptors and coactivators are recruited leading to transcriptional activation. The chain is Retinoic acid receptor RXR-alpha (rxra) from Xenopus laevis (African clawed frog).